A 476-amino-acid chain; its full sequence is Aspartyl/glutamyl-tRNA(Asn/Gln) amidotransferase subunit B (476 aa).

The protein belongs to the GatB/GatE family. GatB subfamily. As to quaternary structure, heterotrimer of A, B and C subunits.

The catalysed reaction is L-glutamyl-tRNA(Gln) + L-glutamine + ATP + H2O = L-glutaminyl-tRNA(Gln) + L-glutamate + ADP + phosphate + H(+). It catalyses the reaction L-aspartyl-tRNA(Asn) + L-glutamine + ATP + H2O = L-asparaginyl-tRNA(Asn) + L-glutamate + ADP + phosphate + 2 H(+). Allows the formation of correctly charged Asn-tRNA(Asn) or Gln-tRNA(Gln) through the transamidation of misacylated Asp-tRNA(Asn) or Glu-tRNA(Gln) in organisms which lack either or both of asparaginyl-tRNA or glutaminyl-tRNA synthetases. The reaction takes place in the presence of glutamine and ATP through an activated phospho-Asp-tRNA(Asn) or phospho-Glu-tRNA(Gln). The protein is Aspartyl/glutamyl-tRNA(Asn/Gln) amidotransferase subunit B of Latilactobacillus sakei subsp. sakei (strain 23K) (Lactobacillus sakei subsp. sakei).